The following is a 184-amino-acid chain: Secreted protein B (184 aa).

The N-terminal stretch at 1–19 is a signal peptide; that stretch reads MRFILVLVLILGLVSSSFG. Residue asparagine 129 is glycosylated (N-linked (GlcNAc...) asparagine). The Cell attachment site motif lies at 164–166; the sequence is RGD.

Belongs to the Sct family.

It localises to the secreted. The protein is Secreted protein B (29C) of Dictyostelium discoideum (Social amoeba).